A 49-amino-acid chain; its full sequence is Delta-actitoxin-Axm1h (49 aa).

3 disulfide bridges follow: C4–C46, C6–C36, and C29–C47.

Belongs to the sea anemone sodium channel inhibitory toxin family. Type I subfamily.

The protein resides in the secreted. Its subcellular location is the nematocyst. Functionally, binds specifically to voltage-gated sodium channels (Nav) (site 3), thereby delaying their inactivation during signal transduction. Thus it may strongly stimulate mammalian cardiac muscle contraction. This chain is Delta-actitoxin-Axm1h, found in Anthopleura xanthogrammica (Giant green sea anemone).